Reading from the N-terminus, the 78-residue chain is RNA-binding protein Hfq (78 aa).

One can recognise a Sm domain in the interval 10–69; that stretch reads DPFLNALRKEHVPVSIYLVNGIKLQGNIESFDQYVVLLRNTVTQMVYKHAISTVVPARPV.

Belongs to the Hfq family. As to quaternary structure, homohexamer.

RNA chaperone that binds small regulatory RNA (sRNAs) and mRNAs to facilitate mRNA translational regulation in response to envelope stress, environmental stress and changes in metabolite concentrations. Also binds with high specificity to tRNAs. In Paraburkholderia phytofirmans (strain DSM 17436 / LMG 22146 / PsJN) (Burkholderia phytofirmans), this protein is RNA-binding protein Hfq.